The following is a 66-amino-acid chain: Large ribosomal subunit protein bL35 (66 aa).

Belongs to the bacterial ribosomal protein bL35 family.

The protein is Large ribosomal subunit protein bL35 of Parvibaculum lavamentivorans (strain DS-1 / DSM 13023 / NCIMB 13966).